The primary structure comprises 187 residues: Endoribonuclease YbeY (187 aa).

Zn(2+) is bound by residues histidine 151, histidine 155, and histidine 161.

This sequence belongs to the endoribonuclease YbeY family. Zn(2+) is required as a cofactor.

The protein localises to the cytoplasm. Its function is as follows. Single strand-specific metallo-endoribonuclease involved in late-stage 70S ribosome quality control and in maturation of the 3' terminus of the 16S rRNA. The chain is Endoribonuclease YbeY from Prochlorococcus marinus (strain MIT 9313).